The sequence spans 109 residues: Synaptobrevin-1 (109 aa).

Positions 1–26 are disordered; sequence MDAQGDAGAQGGSQGGPRPSNKRLQQ. At 1–86 the chain is on the cytoplasmic side; it reads MDAQGDAGAQ…KRKYWWKNIK (86 aa). The region spanning 23–83 is the v-SNARE coiled-coil homology domain; that stretch reads RLQQTQAQVD…ATLKRKYWWK (61 aa). The helical; Anchor for type IV membrane protein transmembrane segment at 87–107 threads the bilayer; the sequence is MMIIMCAIVVILIIIIVLWAG. The Extracellular segment spans residues 108–109; that stretch reads GK.

The protein belongs to the synaptobrevin family. In terms of assembly, part of the SNARE core complex containing ric-4/SNAP25, snb-1/VAMP2 and unc-64/STX1A. This complex binds to cpx-1/CPLX1. Expressed in the nervous system notably the nerve ring, ventral cord and dorsal cord.

It localises to the cytoplasmic vesicle. It is found in the secretory vesicle. Its subcellular location is the synaptic vesicle membrane. The protein resides in the cell membrane. The protein localises to the synapse. It localises to the synaptosome. In terms of biological role, involved in the targeting and/or fusion of transport vesicles to their target membrane. Acts in neuronal exocytosis of synaptic transmission. Likely to have a role in cholinergic transmisson. Required for viability, coordinated movement and M3 pharynx motor neuron function. The sequence is that of Synaptobrevin-1 from Caenorhabditis elegans.